A 749-amino-acid chain; its full sequence is Cytosolic phospholipase A2 (749 aa).

The phospholipid binding stretch occupies residues 1-178 (MSFIDPYQHI…MKKLLGPKNS (178 aa)). S2 carries the phosphoserine modification. Residues 6-122 (PYQHIIVEHQ…KVGEKKEVPF (117 aa)) form the C2 domain. D40, T41, D43, N65, D93, A94, and N95 together coordinate Ca(2+). The PLA2c domain occupies 140-740 (SCPDLRFSMA…SNVEARRFFN (601 aa)). The active-site Nucleophile is S228. Position 268 is a phosphothreonine (T268). The segment at 409-457 (GSQSRGSTMEEELENITTKHIVSNDSSDSDDESHEPKGTENEDAGSDYQ) is disordered. S434, S435, and S437 each carry phosphoserine. Position 505 is a phosphoserine; by MAPK (S505). S515 bears the Phosphoserine mark. K541 is covalently cross-linked (Glycyl lysine isopeptide (Lys-Gly) (interchain with G-Cter in SUMO2)). D549 acts as the Proton acceptor in catalysis. K606 is covalently cross-linked (Glycyl lysine isopeptide (Lys-Gly) (interchain with G-Cter in SUMO2)). A phosphoserine mark is found at S727 and S729.

In terms of assembly, interacts with KAT5. In terms of processing, phosphorylated at both Ser-505 and Ser-727 in response to mitogenic stimuli.

The protein localises to the cytoplasm. Its subcellular location is the golgi apparatus membrane. It localises to the nucleus envelope. It carries out the reaction a 1,2-diacyl-sn-glycero-3-phosphocholine + H2O = a 1-acyl-sn-glycero-3-phosphocholine + a fatty acid + H(+). The enzyme catalyses a 1-O-alkyl-2-acyl-sn-glycero-3-phosphocholine + H2O = a 1-O-alkyl-sn-glycero-3-phosphocholine + a fatty acid + H(+). The catalysed reaction is a 1-acyl-sn-glycero-3-phosphocholine + H2O = sn-glycerol 3-phosphocholine + a fatty acid + H(+). It catalyses the reaction 1-hexadecanoyl-2-(5Z,8Z,11Z,14Z-eicosatetraenoyl)-sn-glycero-3-phosphocholine + H2O = 1-hexadecanoyl-sn-glycero-3-phosphocholine + (5Z,8Z,11Z,14Z)-eicosatetraenoate + H(+). It carries out the reaction 1,2-di-(5Z,8Z,11Z,14Z-eicosatetraenoyl)-sn-glycero-3-phosphocholine + H2O = 1-(5Z,8Z,11Z,14Z-eicosatetraenoyl)-sn-glycero-3-phosphocholine + (5Z,8Z,11Z,14Z)-eicosatetraenoate + H(+). The enzyme catalyses 1-octadecanoyl-2-(5Z,8Z,11Z,14Z-eicosatetraenoyl)-sn-glycero-3-phosphocholine + H2O = 1-octadecanoyl-sn-glycero-3-phosphocholine + (5Z,8Z,11Z,14Z)-eicosatetraenoate + H(+). The catalysed reaction is 1-hexadecanoyl-2-(9Z,12Z-octadecadienoyl)-sn-glycero-3-phosphocholine + H2O = (9Z,12Z)-octadecadienoate + 1-hexadecanoyl-sn-glycero-3-phosphocholine + H(+). It catalyses the reaction 1-octadecanoyl-2-(9Z,12Z,15Z-octadecatrienoyl)-sn-glycero-3-phosphocholine + H2O = (9Z,12Z,15Z)-octadecatrienoate + 1-octadecanoyl-sn-glycero-3-phosphocholine + H(+). It carries out the reaction 1-(5Z,8Z,11Z,14Z-eicosatetraenoyl)-2-hexadecanoyl-sn-glycero-3-phosphocholine + H2O = 1-(5Z,8Z,11Z,14Z-eicosatetraenoyl)-sn-glycero-3-phosphocholine + hexadecanoate + H(+). The enzyme catalyses 1-O-hexadecyl-2-(5Z,8Z,11Z,14Z)-eicosatetraenoyl-sn-glycero-3-phosphocholine + H2O = 1-O-hexadecyl-sn-glycero-3-phosphocholine + (5Z,8Z,11Z,14Z)-eicosatetraenoate + H(+). The catalysed reaction is 1,2-di-(9Z-octadecenoyl)-sn-glycero-3-phospho-(1'-sn-glycerol) + H2O = 1-(9Z-octadecenoyl)-sn-glycero-3-phospho-(1'-sn-glycerol) + (9Z)-octadecenoate + H(+). It catalyses the reaction 1-octadecanoyl-2-(5Z,8Z,11Z,14Z-eicosatetraenoyl)-sn-glycero-3-phosphate + H2O = 1-octadecanoyl-sn-glycero-3-phosphate + (5Z,8Z,11Z,14Z)-eicosatetraenoate + H(+). It carries out the reaction 1-hexadecanoyl-sn-glycero-3-phosphocholine + H2O = sn-glycerol 3-phosphocholine + hexadecanoate + H(+). The enzyme catalyses 2-(prostaglandin E2)-sn-glycero-3-phosphoethanolamine + H2O = sn-glycero-3-phosphoethanolamine + prostaglandin E2 + H(+). The catalysed reaction is 2-[(15S)-hydroxy-(5Z,8Z,11Z,13E)-eicosatetraenoyl]-sn-glycero-3-phosphocholine + H2O = (15S)-hydroxy-(5Z,8Z,11Z,13E)-eicosatetraenoate + sn-glycerol 3-phosphocholine + H(+). It catalyses the reaction 2-[(15R)-hydroxy-(5Z,8Z,11Z,13E)-eicosatetraenoyl]-sn-glycero-3-phosphocholine + H2O = (15R)-hydroxy-(5Z,8Z,11Z,13E)-eicosatetraenoate + sn-glycerol 3-phosphocholine + H(+). It carries out the reaction 2-(prostaglandin E2)-sn-glycero-3-phosphocholine + H2O = prostaglandin E2 + sn-glycerol 3-phosphocholine + H(+). The enzyme catalyses 2-[(11R)-hydroxy-(5Z,8Z,12E,14Z)-eicosatetraenoyl]-sn-glycero-3-phosphocholine + H2O = (11R)-hydroxy-(5Z,8Z,12E,14Z)-eicosatetraenoate + sn-glycerol 3-phosphocholine + H(+). The catalysed reaction is 1-(5Z,8Z,11Z,14Z-eicosatetraenoyl)-2-O-hexadecyl-sn-glycero-3-phosphocholine + H2O = 2-O-hexadecyl-sn-glycero-3-phosphocholine + (5Z,8Z,11Z,14Z)-eicosatetraenoate + H(+). It catalyses the reaction 1-octadecanoyl-2-(5Z,8Z,11Z,14Z-eicosatetraenoyl)-sn-glycero-3-phosphocholine + glycerol = 1-(5Z,8Z,11Z,14Z-eicosatetraenoyl)-glycerol + 1-octadecanoyl-sn-glycero-3-phosphocholine. It carries out the reaction 1-octadecanoyl-2-(9Z,12Z,15Z-octadecatrienoyl)-sn-glycero-3-phosphocholine + glycerol = 1-(9Z,12Z,15Z-octadecatrienoyl)-glycerol + 1-octadecanoyl-sn-glycero-3-phosphocholine. The protein operates within membrane lipid metabolism; glycerophospholipid metabolism. It functions in the pathway lipid metabolism; arachidonate metabolism. It participates in lipid metabolism; prostaglandin biosynthesis. Its pathway is lipid metabolism; leukotriene B4 biosynthesis. Activated by cytosolic calcium, which is necessary for binding to membrane lipids. Activated by phosphorylation in response to mitogenic stimuli. Its function is as follows. Has primarily calcium-dependent phospholipase and lysophospholipase activities, with a major role in membrane lipid remodeling and biosynthesis of lipid mediators of the inflammatory response. Plays an important role in embryo implantation and parturition through its ability to trigger prostanoid production. Preferentially hydrolyzes the ester bond of the fatty acyl group attached at sn-2 position of phospholipids (phospholipase A2 activity). Selectively hydrolyzes sn-2 arachidonoyl group from membrane phospholipids, providing the precursor for eicosanoid biosynthesis via the cyclooxygenase pathway. In an alternative pathway of eicosanoid biosynthesis, hydrolyzes sn-2 fatty acyl chain of eicosanoid lysophopholipids to release free bioactive eicosanoids. Hydrolyzes the ester bond of the fatty acyl group attached at sn-1 position of phospholipids (phospholipase A1 activity) only if an ether linkage rather than an ester linkage is present at the sn-2 position. This hydrolysis is not stereospecific. Has calcium-independent phospholipase A2 and lysophospholipase activities in the presence of phosphoinositides. Has O-acyltransferase activity. Catalyzes the transfer of fatty acyl chains from phospholipids to a primary hydroxyl group of glycerol (sn-1 or sn-3), potentially contributing to monoacylglycerol synthesis. This is Cytosolic phospholipase A2 (PLA2G4A) from Pongo abelii (Sumatran orangutan).